The chain runs to 333 residues: Serine proteinase inhibitor 2 (333 aa).

Belongs to the serpin family. Poxviruses subfamily.

The protein localises to the host cytoplasm. Weak inhibitor of the interleukin-1-beta converting enzyme (ICE) and of granzyme B. Does not form a stable complex with ICE, but can for a stable complex with granzyme B. The protein is Serine proteinase inhibitor 2 (SERP2) of Myxoma virus (strain Uriarra) (MYXV).